The sequence spans 127 residues: Small ribosomal subunit protein bS6 (127 aa).

Residues 96 to 127 (VTTPSPMMKEEKSRSLTPAAGDEGKPAEAAEA) are disordered. The segment covering 117–127 (DEGKPAEAAEA) has biased composition (basic and acidic residues).

Belongs to the bacterial ribosomal protein bS6 family.

Its function is as follows. Binds together with bS18 to 16S ribosomal RNA. The sequence is that of Small ribosomal subunit protein bS6 from Azoarcus sp. (strain BH72).